Consider the following 129-residue polypeptide: Small ribosomal subunit protein uS11c (129 aa).

It belongs to the universal ribosomal protein uS11 family. In terms of assembly, part of the 30S ribosomal subunit.

The protein localises to the plastid. It localises to the chloroplast. This is Small ribosomal subunit protein uS11c from Euglena gracilis.